Consider the following 455-residue polypeptide: Membrane-bound lytic murein transglycosylase F (455 aa).

Positions 1 to 21 (MPKSAVSLFAILLLAASVITA) are cleaved as a signal peptide. Residues 22–264 (CSPQTRPDAM…HIKEQHFGHV (243 aa)) are non-LT domain. The segment at 265 to 455 (KQFNYVTTSL…LKYLDEQGRL (191 aa)) is LT domain. The active site involves Glu-309.

It in the N-terminal section; belongs to the bacterial solute-binding protein 3 family. In the C-terminal section; belongs to the transglycosylase Slt family.

It is found in the cell outer membrane. The enzyme catalyses Exolytic cleavage of the (1-&gt;4)-beta-glycosidic linkage between N-acetylmuramic acid (MurNAc) and N-acetylglucosamine (GlcNAc) residues in peptidoglycan, from either the reducing or the non-reducing ends of the peptidoglycan chains, with concomitant formation of a 1,6-anhydrobond in the MurNAc residue.. Murein-degrading enzyme that degrades murein glycan strands and insoluble, high-molecular weight murein sacculi, with the concomitant formation of a 1,6-anhydromuramoyl product. Lytic transglycosylases (LTs) play an integral role in the metabolism of the peptidoglycan (PG) sacculus. Their lytic action creates space within the PG sacculus to allow for its expansion as well as for the insertion of various structures such as secretion systems and flagella. This is Membrane-bound lytic murein transglycosylase F from Idiomarina loihiensis (strain ATCC BAA-735 / DSM 15497 / L2-TR).